A 236-amino-acid chain; its full sequence is Biosynthetic peptidoglycan transglycosylase (236 aa).

The chain crosses the membrane as a helical span at residues 12–31; the sequence is ALLWFAAGSALVVLVLRWVP.

Belongs to the glycosyltransferase 51 family.

The protein localises to the cell inner membrane. It carries out the reaction [GlcNAc-(1-&gt;4)-Mur2Ac(oyl-L-Ala-gamma-D-Glu-L-Lys-D-Ala-D-Ala)](n)-di-trans,octa-cis-undecaprenyl diphosphate + beta-D-GlcNAc-(1-&gt;4)-Mur2Ac(oyl-L-Ala-gamma-D-Glu-L-Lys-D-Ala-D-Ala)-di-trans,octa-cis-undecaprenyl diphosphate = [GlcNAc-(1-&gt;4)-Mur2Ac(oyl-L-Ala-gamma-D-Glu-L-Lys-D-Ala-D-Ala)](n+1)-di-trans,octa-cis-undecaprenyl diphosphate + di-trans,octa-cis-undecaprenyl diphosphate + H(+). The protein operates within cell wall biogenesis; peptidoglycan biosynthesis. Its function is as follows. Peptidoglycan polymerase that catalyzes glycan chain elongation from lipid-linked precursors. This is Biosynthetic peptidoglycan transglycosylase from Pseudomonas syringae pv. tomato (strain ATCC BAA-871 / DC3000).